Consider the following 345-residue polypeptide: S-adenosylmethionine:tRNA ribosyltransferase-isomerase (345 aa).

Belongs to the QueA family. Monomer.

Its subcellular location is the cytoplasm. It carries out the reaction 7-aminomethyl-7-carbaguanosine(34) in tRNA + S-adenosyl-L-methionine = epoxyqueuosine(34) in tRNA + adenine + L-methionine + 2 H(+). The protein operates within tRNA modification; tRNA-queuosine biosynthesis. In terms of biological role, transfers and isomerizes the ribose moiety from AdoMet to the 7-aminomethyl group of 7-deazaguanine (preQ1-tRNA) to give epoxyqueuosine (oQ-tRNA). The sequence is that of S-adenosylmethionine:tRNA ribosyltransferase-isomerase from Shewanella baltica (strain OS155 / ATCC BAA-1091).